Consider the following 322-residue polypeptide: GTP 3',8-cyclase (322 aa).

One can recognise a Radical SAM core domain in the interval 5 to 233 (KYGRVVDYLR…NAPASIYRLD (229 aa)). R14 is a binding site for GTP. [4Fe-4S] cluster is bound by residues C21 and C25. Y27 lines the S-adenosyl-L-methionine pocket. C28 is a binding site for [4Fe-4S] cluster. A GTP-binding site is contributed by R64. Residue G68 participates in S-adenosyl-L-methionine binding. Residue T95 participates in GTP binding. Position 119 (S119) interacts with S-adenosyl-L-methionine. Residue K155 coordinates GTP. Residue M189 participates in S-adenosyl-L-methionine binding. Residues C249 and C252 each coordinate [4Fe-4S] cluster. 254 to 256 (RIR) provides a ligand contact to GTP. C266 provides a ligand contact to [4Fe-4S] cluster.

The protein belongs to the radical SAM superfamily. MoaA family. As to quaternary structure, monomer and homodimer. It depends on [4Fe-4S] cluster as a cofactor.

It catalyses the reaction GTP + AH2 + S-adenosyl-L-methionine = (8S)-3',8-cyclo-7,8-dihydroguanosine 5'-triphosphate + 5'-deoxyadenosine + L-methionine + A + H(+). It participates in cofactor biosynthesis; molybdopterin biosynthesis. Functionally, catalyzes the cyclization of GTP to (8S)-3',8-cyclo-7,8-dihydroguanosine 5'-triphosphate. This Campylobacter curvus (strain 525.92) protein is GTP 3',8-cyclase.